Reading from the N-terminus, the 445-residue chain is Phosphoglucosamine mutase (445 aa).

The Phosphoserine intermediate role is filled by serine 102. Mg(2+) contacts are provided by serine 102, aspartate 241, aspartate 243, and aspartate 245. The residue at position 102 (serine 102) is a Phosphoserine.

The protein belongs to the phosphohexose mutase family. Mg(2+) serves as cofactor. Activated by phosphorylation.

It carries out the reaction alpha-D-glucosamine 1-phosphate = D-glucosamine 6-phosphate. Its function is as follows. Catalyzes the conversion of glucosamine-6-phosphate to glucosamine-1-phosphate. This chain is Phosphoglucosamine mutase, found in Shewanella sp. (strain ANA-3).